The following is an 87-amino-acid chain: Small ribosomal subunit protein uS17 (87 aa).

It belongs to the universal ribosomal protein uS17 family. As to quaternary structure, part of the 30S ribosomal subunit.

Functionally, one of the primary rRNA binding proteins, it binds specifically to the 5'-end of 16S ribosomal RNA. The protein is Small ribosomal subunit protein uS17 of Hydrogenovibrio crunogenus (strain DSM 25203 / XCL-2) (Thiomicrospira crunogena).